The primary structure comprises 379 residues: Acyl-CoA dehydrogenase, short-chain specific (379 aa).

It belongs to the acyl-CoA dehydrogenase family. FAD is required as a cofactor.

It catalyses the reaction butanoyl-CoA + oxidized [electron-transfer flavoprotein] + H(+) = (2E)-butenoyl-CoA + reduced [electron-transfer flavoprotein]. It carries out the reaction a short-chain 2,3-saturated fatty acyl-CoA + oxidized [electron-transfer flavoprotein] + H(+) = a short-chain (2E)-enoyl-CoA + reduced [electron-transfer flavoprotein]. Its pathway is lipid metabolism; butanoate metabolism. This is Acyl-CoA dehydrogenase, short-chain specific (bcd) from Clostridium acetobutylicum (strain ATCC 824 / DSM 792 / JCM 1419 / IAM 19013 / LMG 5710 / NBRC 13948 / NRRL B-527 / VKM B-1787 / 2291 / W).